Consider the following 379-residue polypeptide: Alcohol dehydrogenase 2 (379 aa).

A Zn(2+)-binding site is contributed by cysteine 48. Position 49–53 (49–53 (HTDML)) interacts with NAD(+). Zn(2+) is bound by residues histidine 69, cysteine 100, cysteine 103, cysteine 106, cysteine 114, and cysteine 178. Residues 203-208 (GLGAVG), aspartate 227, lysine 232, 275-277 (TGI), 298-300 (IGA), and 321-323 (TTF) each bind NAD(+).

This sequence belongs to the zinc-containing alcohol dehydrogenase family. Class-IV subfamily. Homodimer. Zn(2+) is required as a cofactor. Expressed in flowers and disk florets.

It carries out the reaction (R,R)-chrysanthemol + NAD(+) = (1R,3R)-chrysanthemal + NADH + H(+). The enzyme catalyses nerol + NAD(+) = neral + NADH + H(+). The catalysed reaction is (S)-(-)-citronellol + NAD(+) = (S)-(-)-citronellal + NADH + H(+). It catalyses the reaction perillyl alcohol + NAD(+) = perillyl aldehyde + NADH + H(+). It carries out the reaction (6E)-8-hydroxygeraniol + NAD(+) = (6E)-8-hydroxygeranial + NADH + H(+). The enzyme catalyses (2E)-geraniol + NAD(+) = (2E)-geranial + NADH + H(+). It participates in isoprenoid biosynthesis. Component of the monoterpenoid pyrethrins biosynthesis; pyrethrins are widely used plant-derived pesticide. Mediates the conversion of trans-chrysanthemol into trans-chrysanthemal. The sequence is that of Alcohol dehydrogenase 2 from Tanacetum cinerariifolium (Dalmatian daisy).